The sequence spans 339 residues: Anthranilate phosphoribosyltransferase (339 aa).

5-phospho-alpha-D-ribose 1-diphosphate contacts are provided by residues glycine 82, 85 to 86, 92 to 95, 110 to 118, and serine 122; these read GD, NIST, and KHGNRGISS. An anthranilate-binding site is contributed by glycine 82. Residue serine 94 participates in Mg(2+) binding. Anthranilate is bound at residue asparagine 113. Anthranilate is bound at residue arginine 168. Residues aspartate 227 and glutamate 228 each contribute to the Mg(2+) site.

Belongs to the anthranilate phosphoribosyltransferase family. As to quaternary structure, homodimer. Mg(2+) serves as cofactor.

It catalyses the reaction N-(5-phospho-beta-D-ribosyl)anthranilate + diphosphate = 5-phospho-alpha-D-ribose 1-diphosphate + anthranilate. It functions in the pathway amino-acid biosynthesis; L-tryptophan biosynthesis; L-tryptophan from chorismate: step 2/5. Functionally, catalyzes the transfer of the phosphoribosyl group of 5-phosphorylribose-1-pyrophosphate (PRPP) to anthranilate to yield N-(5'-phosphoribosyl)-anthranilate (PRA). This Vesicomyosocius okutanii subsp. Calyptogena okutanii (strain HA) protein is Anthranilate phosphoribosyltransferase.